The following is a 396-amino-acid chain: L-lactate dehydrogenase (396 aa).

The region spanning 1–380 (MIISAASDYR…TQDSLVQGLG (380 aa)) is the FMN hydroxy acid dehydrogenase domain. Tyrosine 24 provides a ligand contact to substrate. FMN is bound by residues serine 106 and glutamine 127. Tyrosine 129 is a substrate binding site. Threonine 155 is a binding site for FMN. Arginine 164 provides a ligand contact to substrate. Position 251 (lysine 251) interacts with FMN. The Proton acceptor role is filled by histidine 275. Position 278 (arginine 278) interacts with substrate. An FMN-binding site is contributed by 306-330 (DSGIRNGLDVVRMIALGADTVLLGR).

The protein belongs to the FMN-dependent alpha-hydroxy acid dehydrogenase family. FMN is required as a cofactor.

The protein resides in the cell inner membrane. It carries out the reaction (S)-lactate + A = pyruvate + AH2. Its function is as follows. Catalyzes the conversion of L-lactate to pyruvate. Is coupled to the respiratory chain. This chain is L-lactate dehydrogenase, found in Escherichia coli O7:K1 (strain IAI39 / ExPEC).